The following is a 64-amino-acid chain: Conotoxin Im11.2 (64 aa).

Residues 1 to 26 (MMFRLTSVSCFLLVIVCLNLVVLTNA) form the signal peptide. Cystine bridges form between C27-C41, C34-C46, C40-C50, and C45-C54. D57 carries the aspartic acid 1-amide modification. Residues 61-64 (ATFQ) constitute a propeptide that is removed on maturation.

Belongs to the conotoxin I2 superfamily. Expressed by the venom duct.

The protein resides in the secreted. The polypeptide is Conotoxin Im11.2 (Conus imperialis (Imperial cone)).